The following is an 883-amino-acid chain: MPILLFLIDTSASMNQRSHLGTTYLDTAKGAVETFMKLRARDPASRGDRYMLVTFEEPPYAIKAGWKENHATFMNELKNLQAEGLTTLGQSLRTAFDLLNLNRLVTGIDNYGQGRNPFFLEPAIIITITDGSKLTTTSGVQDELHLPLNSPLPGSELTKEPFRWDQRLFALVLRLPGTMSVESEQLTGVPLDDSAITPMCEVTGGRSYSVCSPRMLNQCLESLVQKVQSGVVINFEKAGPDPPPAEEGQPDISRPFGSQPWHSCHKLIYVRPNPKTGVPIGHWPVPESFWPDQNSPTLPPRTSHPVVKFSCTDCEPMVIDKLPFDKYELEPSPLTQFILERKSPQTCWQVYVSNSAKYNELGHPFGYLKASTALTCVNLFVMPYNYPVLLPLLDDLFKVHKAKPTLKWRQSFESYLKTMPPYYLGPLKKAVRMMGAPNLIADSMEYGLSYSVISYLKKLSQQAKIESDRVIGSVGKKVVQETGIKVRSRSHGLSMAHRKGFQVLQGISEDVPHRLLDLNMKEYTGFQVALLNKDLKPQTFRNAYDIPRRNLLDHLTRMRSNLLKSTRKFLKGQDEDQVHSVPIAQMGNYQEYLKQVPSPLRELDPDQPRRLHTFGNPFKLDKKGMMIDEADEFVAGPQNKHKRPGEPSMQGIPKRRRCASPLLRGRRQSPAVNSHIGGKGPPAPMTQAQPGLIKPLPLHKEATNDSIVDDVVENHVADQLSSDMTPNAMDTEFLTSPPNLLEPSTNHTEALGHEHLGNNDLTVGGFLENHEEPRNKEQSAEENIPASSLNKGKKLMHCRSHEEVNTELKAQIMKEIRKPGRKYERIFTLLKHVQGSLQTRLIFLQNVIKEASRFKKRMLIEQLENFLDEIHRRANQINHINSN.

The 225-residue stretch at 3–227 (ILLFLIDTSA…QCLESLVQKV (225 aa)) folds into the VWFA domain. An Inhibitory loop motif is present at residues 625-632 (MMIDEADE). Residues 666–686 (RRQSPAVNSHIGGKGPPAPMT) are disordered. A Phosphoserine modification is found at Ser800.

It belongs to the Integrator subunit 6 family. Component of the Integrator complex, composed of core subunits INTS1, INTS2, INTS3, INTS4, INTS5, INTS6, INTS7, INTS8, INTS9/RC74, INTS10, INTS11/CPSF3L, INTS12, INTS13, INTS14 and INTS15. The core complex associates with protein phosphatase 2A subunits PPP2CA and PPP2R1A, to form the Integrator-PP2A (INTAC) complex.

It is found in the nucleus. The protein resides in the chromosome. In terms of biological role, component of the integrator complex, a multiprotein complex that terminates RNA polymerase II (Pol II) transcription in the promoter-proximal region of genes. The integrator complex provides a quality checkpoint during transcription elongation by driving premature transcription termination of transcripts that are unfavorably configured for transcriptional elongation: the complex terminates transcription by (1) catalyzing dephosphorylation of the C-terminal domain (CTD) of Pol II subunit POLR2A/RPB1 and SUPT5H/SPT5, (2) degrading the exiting nascent RNA transcript via endonuclease activity and (3) promoting the release of Pol II from bound DNA. The integrator complex is also involved in terminating the synthesis of non-coding Pol II transcripts, such as enhancer RNAs (eRNAs), small nuclear RNAs (snRNAs), telomerase RNAs and long non-coding RNAs (lncRNAs). Within the integrator complex, INTS6 acts as a molecular adapter that promotes assembly of protein phosphatase 2A (PP2A) subunits to the integrator core complex, promoting recruitment of PP2A to transcription pause-release checkpoint. Mediates recruitment of cytoplasmic dynein to the nuclear envelope, probably as component of the integrator complex. This is Integrator complex subunit 6 (Ints6) from Mus musculus (Mouse).